Reading from the N-terminus, the 1156-residue chain is Nitric oxide synthase, inducible (1156 aa).

Residues 23–27 (DINNN) carry the DINNN-motif; mediates interaction with SPSB1, SPSB2 and SPSB4 motif. Positions 27–84 (NVGKFYQPPSSPVTQDDPKRHSPGKHGNESPQPLTGTVKTSPESLSKLDAPPSACPRH) are disordered. Residues 55-70 (ESPQPLTGTVKTSPES) are compositionally biased toward polar residues. The Zn(2+) site is built by Cys-110 and Cys-115. Ser-118 lines the (6R)-L-erythro-5,6,7,8-tetrahydrobiopterin pocket. Residue Cys-200 participates in heme b binding. L-arginine-binding residues include Gln-263, Trp-372, Tyr-373, and Glu-377. The (6R)-L-erythro-5,6,7,8-tetrahydrobiopterin site is built by Arg-381, Ile-462, Trp-463, and Phe-476. Residue Tyr-491 coordinates heme b. Residues 515-535 (FKVLVKAVFFASVLMHKAMAS) form a calmodulin-binding region. In terms of domain architecture, Flavodoxin-like spans 539–677 (ATILFATETG…AFRSWAVQTF (139 aa)). The FMN site is built by Thr-545, Glu-546, Thr-547, Arg-549, and Ser-550. At Tyr-575 the chain carries Phosphotyrosine. FMN contacts are provided by Ser-591, Thr-592, Ser-628, Cys-635, Glu-661, and Gln-665. The region spanning 730 to 970 (KHVFTMRLKS…VRSASGFQLP (241 aa)) is the FAD-binding FR-type domain. Arg-750 is an NADP(+) binding site. The FAD site is built by His-772, Arg-906, Tyr-908, Ser-909, Thr-924, and Ala-926. Thr-929 is an NADP(+) binding site. 4 residues coordinate FAD: Tyr-930, Val-943, Cys-944, and Ser-945. Residues Thr-984, Arg-1017, Ser-1046, Arg-1047, Lys-1053, Tyr-1055, Gln-1057, and Asp-1090 each contribute to the NADP(+) site.

This sequence belongs to the NOS family. As to quaternary structure, homodimer. Interacts with NHERF1. Interacts with GAPDH; induced by oxidatively-modified low-densitity lipoprotein (LDL(ox)). Interacts with S100A8 and S100A9 to form the iNOS-S100A8/9 transnitrosylase complex. Interacts with SPSB1, SPSB2 and SPSB4. Interacts with ELOC and CUL5 in the presence of SPSB1 or SPSB2 or SPSB4. Forms a complex with ASL, ASS1 and HSP90AA1; the complex regulates cell-autonomous L-arginine synthesis and citrulline recycling while channeling extracellular L-arginine to nitric oxide synthesis pathway. It depends on heme b as a cofactor. Requires FAD as cofactor. FMN is required as a cofactor. The cofactor is (6R)-L-erythro-5,6,7,8-tetrahydrobiopterin. Post-translationally, polyubiquitinated; mediated by SPSB1, SPSB2 and SPSB4, leading to proteasomal degradation.

It localises to the cytoplasm. The protein localises to the cytosol. The catalysed reaction is 2 L-arginine + 3 NADPH + 4 O2 + H(+) = 2 L-citrulline + 2 nitric oxide + 3 NADP(+) + 4 H2O. Regulated by calcium/calmodulin. Its function is as follows. Produces nitric oxide (NO) which is a messenger molecule with diverse functions throughout the body. In macrophages, NO mediates tumoricidal and bactericidal actions. Also has nitrosylase activity and mediates cysteine S-nitrosylation of cytoplasmic target proteins such PTGS2/COX2. As component of the iNOS-S100A8/9 transnitrosylase complex involved in the selective inflammatory stimulus-dependent S-nitrosylation of GAPDH implicated in regulation of the GAIT complex activity and probably multiple targets including ANXA5, EZR, MSN and VIM. Involved in inflammation, enhances the synthesis of pro-inflammatory mediators such as IL6 and IL8. This Bos taurus (Bovine) protein is Nitric oxide synthase, inducible (NOS2).